The chain runs to 168 residues: Urease accessory protein UreE (168 aa).

The interval 137–168 is disordered; that stretch reads PESGAYHGTTGHGGGHSHSHGHSHDHHHDHSH. A compositionally biased stretch (basic residues) spans 151 to 161; it reads GHSHSHGHSHD.

The protein belongs to the UreE family.

Its subcellular location is the cytoplasm. In terms of biological role, involved in urease metallocenter assembly. Binds nickel. Probably functions as a nickel donor during metallocenter assembly. The polypeptide is Urease accessory protein UreE (Saccharophagus degradans (strain 2-40 / ATCC 43961 / DSM 17024)).